Consider the following 348-residue polypeptide: Holliday junction branch migration complex subunit RuvB (348 aa).

The segment at 4–184 is large ATPase domain (RuvB-L); sequence ADRLIAASGR…FGIVQRLEFY (181 aa). ATP-binding positions include isoleucine 23, arginine 24, glycine 65, lysine 68, threonine 69, threonine 70, 131 to 133, arginine 174, tyrosine 184, and arginine 221; that span reads EDF. Threonine 69 is a Mg(2+) binding site. The segment at 185-255 is small ATPAse domain (RuvB-S); the sequence is NDKDLSTIVS…VADMALNLLD (71 aa). A head domain (RuvB-H) region spans residues 258–348; sequence ERGFDHSDRR…GGDFSGPGDE (91 aa). Residues arginine 294, arginine 313, and arginine 318 each coordinate DNA.

The protein belongs to the RuvB family. In terms of assembly, homohexamer. Forms an RuvA(8)-RuvB(12)-Holliday junction (HJ) complex. HJ DNA is sandwiched between 2 RuvA tetramers; dsDNA enters through RuvA and exits via RuvB. An RuvB hexamer assembles on each DNA strand where it exits the tetramer. Each RuvB hexamer is contacted by two RuvA subunits (via domain III) on 2 adjacent RuvB subunits; this complex drives branch migration. In the full resolvosome a probable DNA-RuvA(4)-RuvB(12)-RuvC(2) complex forms which resolves the HJ.

It localises to the cytoplasm. The enzyme catalyses ATP + H2O = ADP + phosphate + H(+). Functionally, the RuvA-RuvB-RuvC complex processes Holliday junction (HJ) DNA during genetic recombination and DNA repair, while the RuvA-RuvB complex plays an important role in the rescue of blocked DNA replication forks via replication fork reversal (RFR). RuvA specifically binds to HJ cruciform DNA, conferring on it an open structure. The RuvB hexamer acts as an ATP-dependent pump, pulling dsDNA into and through the RuvAB complex. RuvB forms 2 homohexamers on either side of HJ DNA bound by 1 or 2 RuvA tetramers; 4 subunits per hexamer contact DNA at a time. Coordinated motions by a converter formed by DNA-disengaged RuvB subunits stimulates ATP hydrolysis and nucleotide exchange. Immobilization of the converter enables RuvB to convert the ATP-contained energy into a lever motion, pulling 2 nucleotides of DNA out of the RuvA tetramer per ATP hydrolyzed, thus driving DNA branch migration. The RuvB motors rotate together with the DNA substrate, which together with the progressing nucleotide cycle form the mechanistic basis for DNA recombination by continuous HJ branch migration. Branch migration allows RuvC to scan DNA until it finds its consensus sequence, where it cleaves and resolves cruciform DNA. In Pseudomonas putida (strain ATCC 700007 / DSM 6899 / JCM 31910 / BCRC 17059 / LMG 24140 / F1), this protein is Holliday junction branch migration complex subunit RuvB.